A 626-amino-acid polypeptide reads, in one-letter code: Carnitine O-acetyltransferase (626 aa).

Lys93 bears the N6-succinyllysine mark. An N6-acetyllysine; alternate modification is found at Lys261. Lys261 carries the post-translational modification N6-succinyllysine; alternate. Lys268 is modified (N6-acetyllysine). His343 (proton acceptor) is an active-site residue. CoA is bound by residues Lys419 and Lys423–Asp430. The (R)-carnitine site is built by Tyr452 and Ser454. Residue Ser456 coordinates CoA. Thr465 lines the (R)-carnitine pocket. Residues Arg504 and Gln555 each contribute to the CoA site. A Microbody targeting signal motif is present at residues Ala624 to Leu626.

Belongs to the carnitine/choline acetyltransferase family. In terms of assembly, monomer. In terms of tissue distribution, expressed in flagella of epididymal sperm.

The protein resides in the endoplasmic reticulum. Its subcellular location is the peroxisome. It is found in the mitochondrion inner membrane. It carries out the reaction (R)-carnitine + acetyl-CoA = O-acetyl-(R)-carnitine + CoA. The catalysed reaction is propanoyl-CoA + (R)-carnitine = O-propanoyl-(R)-carnitine + CoA. It catalyses the reaction butanoyl-CoA + (R)-carnitine = O-butanoyl-(R)-carnitine + CoA. The enzyme catalyses hexanoyl-CoA + (R)-carnitine = O-hexanoyl-(R)-carnitine + CoA. It carries out the reaction octanoyl-CoA + (R)-carnitine = O-octanoyl-(R)-carnitine + CoA. The catalysed reaction is decanoyl-CoA + (R)-carnitine = O-decanoyl-(R)-carnitine + CoA. It catalyses the reaction 3-methylbutanoyl-CoA + (R)-carnitine = O-3-methylbutanoyl-(R)-carnitine + CoA. The enzyme catalyses 2-methylpropanoyl-CoA + (R)-carnitine = O-isobutanoyl-(R)-carnitine + CoA. It carries out the reaction 2-methylbutanoyl-CoA + (R)-carnitine = O-2-methylbutanoyl-(R)-carnitine + CoA. The catalysed reaction is acetoacetyl-CoA + (R)-carnitine = O-3-oxobutanoyl-(R)-carnitine + CoA. It catalyses the reaction 3-hydroxybutanoyl-CoA + (R)-carnitine = O-3-hydroxybutanoyl-(R)-carnitine + CoA. The enzyme catalyses 4,8-dimethylnonanoyl-CoA + (R)-carnitine = O-4,8-dimethylnonanoyl-(R)-carnitine + CoA. It carries out the reaction 2,6-dimethylheptanoyl-CoA + (R)-carnitine = O-2,6-dimethylheptanoyl-(R)-carnitine + CoA. Its function is as follows. Catalyzes the reversible transfer of acyl groups from carnitine to coenzyme A (CoA) and regulates the acyl-CoA/CoA ratio. Also plays a crucial role in the transport of fatty acids for beta-oxidation. Responsible for the synthesis of short- and branched-chain acylcarnitines. Active towards some branched-chain amino acid oxidation pathway (BCAAO) intermediates. Trans-2-enoyl-CoAs and 2-methylacyl-CoAs are poor substrates. The chain is Carnitine O-acetyltransferase from Rattus norvegicus (Rat).